The following is a 258-amino-acid chain: Spectinomycin 9-adenylyltransferase (258 aa).

It carries out the reaction spectinomycin + ATP = 9-O-adenylylspectinomycin + diphosphate. In terms of biological role, mediates bacterial resistance to spectinomycin, is probably a spectinomycin 9-adenylyltransferase. The sequence is that of Spectinomycin 9-adenylyltransferase from Campylobacter jejuni.